Here is a 354-residue protein sequence, read N- to C-terminus: Glycerol-3-phosphate dehydrogenase [NAD(+)], glycosomal (354 aa).

NAD(+) contacts are provided by residues 15 to 20 (GSGAFG), Phe90, Lys118, and Ala150. Lys118 lines the substrate pocket. Lys203 serves as the catalytic Proton acceptor. Positions 267 and 293 each coordinate NAD(+). 267 to 268 (RN) lines the substrate pocket. Residues 352 to 354 (SKM) carry the Microbody targeting signal motif.

Belongs to the NAD-dependent glycerol-3-phosphate dehydrogenase family.

The protein resides in the glycosome. It catalyses the reaction sn-glycerol 3-phosphate + NAD(+) = dihydroxyacetone phosphate + NADH + H(+). This is Glycerol-3-phosphate dehydrogenase [NAD(+)], glycosomal (GPD) from Trypanosoma brucei rhodesiense.